The sequence spans 147 residues: Large ribosomal subunit protein uL15 (147 aa).

Residues 1–46 are disordered; that stretch reads MSIRLENLSYTPGARKEKHRKGRGHAAGKGKQAGRGQSGQKKRSTV. The span at 16–28 shows a compositional bias: basic residues; it reads KEKHRKGRGHAAG.

The protein belongs to the universal ribosomal protein uL15 family. Part of the 50S ribosomal subunit.

Binds to the 23S rRNA. In Mesomycoplasma hyopneumoniae (strain 7448) (Mycoplasma hyopneumoniae), this protein is Large ribosomal subunit protein uL15.